The following is a 103-amino-acid chain: Large ribosomal subunit protein bL21 (103 aa).

The protein belongs to the bacterial ribosomal protein bL21 family. Part of the 50S ribosomal subunit. Contacts protein L20.

This protein binds to 23S rRNA in the presence of protein L20. This chain is Large ribosomal subunit protein bL21, found in Bordetella petrii (strain ATCC BAA-461 / DSM 12804 / CCUG 43448).